Consider the following 79-residue polypeptide: Large ribosomal subunit protein uL29 (79 aa).

This sequence belongs to the universal ribosomal protein uL29 family.

This chain is Large ribosomal subunit protein uL29, found in Tropheryma whipplei (strain TW08/27) (Whipple's bacillus).